The following is a 206-amino-acid chain: Protein DEHYDRATION-INDUCED 19 (206 aa).

The residue at position 105 (threonine 105) is a Phosphothreonine. Phosphoserine is present on serine 107. The tract at residues 142 to 167 (SSFISPTRSQSSPAPRQTKNVSEDKQ) is disordered. Residues 143 to 161 (SFISPTRSQSSPAPRQTKN) show a composition bias toward polar residues.

The protein belongs to the Di19 family. As to quaternary structure, interacts with ADO2/LKP2, CPK11 and CPK4. Weak interaction with CPK12 and no interactions with CPK1, CPK5 or CPK26. Post-translationally, phosphorylated within the NLS/NES region. As to expression, expressed in seedlings, roots, leaves, stems, flowers and siliques.

It localises to the nucleus. This chain is Protein DEHYDRATION-INDUCED 19 (DI19-1), found in Arabidopsis thaliana (Mouse-ear cress).